The sequence spans 387 residues: Polyphosphate kinase (387 aa).

Mg(2+)-binding residues include Arg347 and Arg377.

It belongs to the polyphosphate kinase 1 (PPK1) family. Requires Mg(2+) as cofactor. Post-translationally, an intermediate of this reaction is the autophosphorylated ppk in which a phosphate is covalently linked to a histidine residue through a N-P bond.

It carries out the reaction [phosphate](n) + ATP = [phosphate](n+1) + ADP. Catalyzes the reversible transfer of the terminal phosphate of ATP to form a long-chain polyphosphate (polyP). The protein is Polyphosphate kinase (ppk) of Aphanizomenon baltica.